We begin with the raw amino-acid sequence, 193 residues long: Rho-related GTP-binding protein RhoA-D (193 aa).

GTP is bound by residues 12 to 19 (GDGACGKT), 30 to 37 (FPEVYVPT), 59 to 63 (DTAGQ), 117 to 120 (NKKD), and 160 to 162 (SAK). The (Microbial infection) O-linked (GlcNAc) tyrosine; by Yersinia Afp18 glycan is linked to tyrosine 34. Cysteine 190 is subject to Cysteine methyl ester. The S-geranylgeranyl cysteine moiety is linked to residue cysteine 190. Residues 191-193 (LLL) constitute a propeptide, removed in mature form.

The protein belongs to the small GTPase superfamily. Rho family. Post-translationally, (Microbial infection) Glycosylated at Tyr-34 by Yersinia ruckeri toxin Afp18. Mono-O-GlcNAcylation by Afp18 inhibits RhoA activation by guanine nucleotide exchange factors and blocks RhoA signaling.

It localises to the cell membrane. In terms of biological role, regulates a signal transduction pathway linking plasma membrane receptors to the assembly of focal adhesions and actin stress fibers. The polypeptide is Rho-related GTP-binding protein RhoA-D (Danio rerio (Zebrafish)).